A 202-amino-acid chain; its full sequence is Dephospho-CoA kinase (202 aa).

The region spanning 6-202 is the DPCK domain; the sequence is KVSITGDLSS…EYFYALKGAL (197 aa). 14–19 lines the ATP pocket; sequence SSGKTE.

It belongs to the CoaE family.

It localises to the cytoplasm. The enzyme catalyses 3'-dephospho-CoA + ATP = ADP + CoA + H(+). The protein operates within cofactor biosynthesis; coenzyme A biosynthesis; CoA from (R)-pantothenate: step 5/5. In terms of biological role, catalyzes the phosphorylation of the 3'-hydroxyl group of dephosphocoenzyme A to form coenzyme A. This chain is Dephospho-CoA kinase, found in Chlamydia felis (strain Fe/C-56) (Chlamydophila felis).